Here is a 692-residue protein sequence, read N- to C-terminus: UvrABC system protein B (692 aa).

The region spanning glutamate 32–phenylalanine 187 is the Helicase ATP-binding domain. Glycine 45–threonine 52 provides a ligand contact to ATP. Positions tyrosine 98 to valine 121 match the Beta-hairpin motif. Positions glutamine 436 to isoleucine 631 constitute a Helicase C-terminal domain. Residues lysine 656–methionine 691 enclose the UVR domain.

It belongs to the UvrB family. As to quaternary structure, forms a heterotetramer with UvrA during the search for lesions. Interacts with UvrC in an incision complex.

It localises to the cytoplasm. In terms of biological role, the UvrABC repair system catalyzes the recognition and processing of DNA lesions. A damage recognition complex composed of 2 UvrA and 2 UvrB subunits scans DNA for abnormalities. Upon binding of the UvrA(2)B(2) complex to a putative damaged site, the DNA wraps around one UvrB monomer. DNA wrap is dependent on ATP binding by UvrB and probably causes local melting of the DNA helix, facilitating insertion of UvrB beta-hairpin between the DNA strands. Then UvrB probes one DNA strand for the presence of a lesion. If a lesion is found the UvrA subunits dissociate and the UvrB-DNA preincision complex is formed. This complex is subsequently bound by UvrC and the second UvrB is released. If no lesion is found, the DNA wraps around the other UvrB subunit that will check the other stand for damage. The protein is UvrABC system protein B of Lactococcus lactis subsp. cremoris (strain SK11).